We begin with the raw amino-acid sequence, 316 residues long: Alkaline ceramidase YPC1 (316 aa).

Residues 1-36 lie on the Lumenal side of the membrane; that stretch reads MGIFRWNYPESSVPGVWGETTSTIDWCEENYVVSPY. A disulfide bridge links C27 with C219. An intramembrane segment occupies 37 to 57; it reads IAEWSNTLTNSVFILSAIYTT. The Lumenal portion of the chain corresponds to 58–68; it reads YSAYKNKLEKR. Residues 69–89 lie within the membrane without spanning it; the sequence is FLLIGFGYGLVGVGSWLFHMT. The Lumenal portion of the chain corresponds to 90-93; sequence LKYR. The chain crosses the membrane as a helical span at residues 94 to 114; the sequence is FQLLDELPMIYAMCIPTWSLV. Topologically, residues 115–135 are cytoplasmic; that stretch reads CEAKEALLNGDNHKKVPLFEQ. A helical transmembrane segment spans residues 136-156; sequence IFIGVIIGLAVTTASILYVIY. Residues 157–160 lie on the Lumenal side of the membrane; sequence KNVD. An intramembrane segment occupies 161–181; it reads IHQILFGVQIVVVAATAGSLT. Residues 182–195 are Lumenal-facing; the sequence is YRYVHDPLAKRNLK. The stretch at 196–216 is an intramembrane region; the sequence is ASMALGAILFLSGYISWLLDI. Residues 217–228 are Lumenal-facing; it reads HYCSFWVHVRRS. The helical transmembrane segment at 229-249 threads the bilayer; sequence ILALPLGVLLEPHGWWHILTG. Residues 250 to 316 lie on the Cytoplasmic side of the membrane; sequence MGIYFYIVSL…DQSIEVKKEK (67 aa).

This sequence belongs to the alkaline ceramidase family.

It is found in the endoplasmic reticulum membrane. The catalysed reaction is N-hexanoyl-sphinganine + H2O = hexanoate + sphinganine. It carries out the reaction sphinganine + hexadecanoate = N-hexadecanoylsphinganine + H2O. It catalyses the reaction N-hexadecanoyl-(4R)-hydroxysphinganine + H2O = (4R)-hydroxysphinganine + hexadecanoate. The enzyme catalyses N-hexadecanoylsphing-4-enine + H2O = sphing-4-enine + hexadecanoate. The catalysed reaction is an N-acyl-(4R)-4-hydroxysphinganine + H2O = (4R)-hydroxysphinganine + a fatty acid. Alkaline ceramidase that hydrolyzes phytoceramide and also dihydroceramide into phytosphingosine or dihydrosphingosine. Prefers phytoceramide. Also has reverse activity as acyl-CoA-independent ceramide synthase, catalyzing synthesis of phytoceramide and dihydroceramide from palmitic acid and phytosphingosine or dihydrosphingosine. Is not responsible for the breakdown of unsaturated ceramide. Preferentially uses very long chain fatty acids (C-24 and C-26) in vivo compared to C-16 in vitro. This chain is Alkaline ceramidase YPC1 (YPC1), found in Saccharomyces cerevisiae (strain ATCC 204508 / S288c) (Baker's yeast).